Consider the following 555-residue polypeptide: CTP synthase (555 aa).

The interval 1-270 (MTKFVFVTGG…DGLICDKLRL (270 aa)) is amidoligase domain. Serine 13 provides a ligand contact to CTP. Serine 13 contacts UTP. ATP-binding positions include 14-19 (SLGKGI) and aspartate 71. Mg(2+) is bound by residues aspartate 71 and glutamate 144. CTP contacts are provided by residues 151–153 (DIE), 191–196 (KTKPTQ), and lysine 227. Residues 191-196 (KTKPTQ) and lysine 227 contribute to the UTP site. One can recognise a Glutamine amidotransferase type-1 domain in the interval 295 to 547 (NIVMVGKYVE…IKAALDHQAA (253 aa)). Glycine 356 lines the L-glutamine pocket. The Nucleophile; for glutamine hydrolysis role is filled by cysteine 383. Residues 384 to 387 (LGMQ), glutamate 407, and arginine 473 contribute to the L-glutamine site. Residues histidine 520 and glutamate 522 contribute to the active site.

Belongs to the CTP synthase family. In terms of assembly, homotetramer.

The enzyme catalyses UTP + L-glutamine + ATP + H2O = CTP + L-glutamate + ADP + phosphate + 2 H(+). It catalyses the reaction L-glutamine + H2O = L-glutamate + NH4(+). It carries out the reaction UTP + NH4(+) + ATP = CTP + ADP + phosphate + 2 H(+). Its pathway is pyrimidine metabolism; CTP biosynthesis via de novo pathway; CTP from UDP: step 2/2. With respect to regulation, allosterically activated by GTP, when glutamine is the substrate; GTP has no effect on the reaction when ammonia is the substrate. The allosteric effector GTP functions by stabilizing the protein conformation that binds the tetrahedral intermediate(s) formed during glutamine hydrolysis. Inhibited by the product CTP, via allosteric rather than competitive inhibition. Its function is as follows. Catalyzes the ATP-dependent amination of UTP to CTP with either L-glutamine or ammonia as the source of nitrogen. Regulates intracellular CTP levels through interactions with the four ribonucleotide triphosphates. This chain is CTP synthase, found in Albidiferax ferrireducens (strain ATCC BAA-621 / DSM 15236 / T118) (Rhodoferax ferrireducens).